The following is a 1197-amino-acid chain: Envelopment polyprotein (1197 aa).

Residues 1–16 form the signal peptide; the sequence is MYVLLTILTSVLVCEA. The Cytoplasmic portion of the chain corresponds to 17–130; sequence IIRVSLSSTR…RDAKQIGRKT (114 aa). The segment at 131-153 is internal signal sequence for glycoprotein N; it reads MAGIAMTVLPALAVFALAPVVFA. Topologically, residues 154 to 582 are lumenal; it reads EDPHLRNRPG…GLINYQCHTA (429 aa). Cystine bridges form between Cys179–Cys188, Cys229–Cys239, Cys250–Cys281, Cys271–Cys284, Cys304–Cys456, Cys322–Cys332, Cys374–Cys434, Cys402–Cys413, Cys420–Cys425, Cys479–Cys482, Cys486–Cys556, and Cys506–Cys511. A helical transmembrane segment spans residues 583 to 603; the sequence is LSAFVVVFVFSSIAIICLAIL. Over 604 to 673 the chain is Cytoplasmic; the sequence is YRVLKCLKIA…APIPRHAPIP (70 aa). The golgi retention signal stretch occupies residues 608–650; sequence KCLKIAPRKVLNPLMWITAFIRWIYKKMVARVADNINQVNREI. Positions 646 to 650 are important for correct targeting of the glycoproteins to the Golgi complex but not for heterodimerization; sequence VNREI. Residues 675–690 are internal signal sequence for glycoprotein C; sequence YSTYLMLLLIVSYASA. 12 cysteine pairs are disulfide-bonded: Cys691–Cys731, Cys704–Cys713, Cys756–Cys852, Cys771–Cys965, Cys777–Cys825, Cys783–Cys832, Cys788–Cys814, Cys818–Cys823, Cys934–Cys947, Cys1029–Cys1101, Cys1039–Cys1042, and Cys1049–Cys1083. Topologically, residues 691–1159 are lumenal; it reads CSELIQASSR…MSWFGGPLKT (469 aa). The interval 777–783 is fusion loop; it reads CHLVGEC. Asn794 carries N-linked (GlcNAc...) asparagine; by host glycosylation. A fusion loop region spans residues 819-830; that stretch reads GGWGCGCFNVNP. Asn1035 carries an N-linked (GlcNAc...) asparagine; by host glycan. Asn1077 is a glycosylation site (N-linked (GlcNAc...) asparagine; by host). Residues 1160-1180 traverse the membrane as a helical segment; the sequence is ILLICLYVALSIGLFFLLIYL. At 1181–1197 the chain is on the cytoplasmic side; sequence GGTGLSKMWLAATKKAS.

This sequence belongs to the phlebovirus envelope glycoprotein family. In terms of assembly, heterodimer with glycoprotein C. Homotrimer (postfusion). Interacts with nucleocapsid protein N and with the polymerase L in order to package them into virus particles. Interacts with host E3 ubiquitin-protein ligase UBR4; this interaction is important for viral RNA production. Interacts with host LRP1; this interaction facilitates virus entry into the host cell. Heterodimer with glycoprotein C. Specific enzymatic cleavages in vivo yield mature proteins including NSm protein, Glycoprotein C, and Glycoprotein N. In terms of processing, glycosylated. The glycans can attach to host CD209/DC-SIGN, and may play a role in virus entry into dendritic cells. Post-translationally, palmitoylated.

It localises to the virion membrane. The protein localises to the host Golgi apparatus membrane. Its subcellular location is the host endoplasmic reticulum membrane. It is found in the host mitochondrion outer membrane. The protein resides in the host Golgi apparatus. It localises to the virion. Functionally, structural component of the virion that interacts with glycoprotein C. It shields the hydrophobic fusion loops of the glycoprotein C, preventing premature fusion. The glycoprotein protrusions are arranged on an icosahedral lattice, with T=12 triangulation. They are able to attach the virion to the host cell receptor CD209/DC-SIGN and to promote fusion of membranes with the late endosome after endocytosis of the virion. Plays a role in the packaging of ribonucleoproteins and polymerase during virus assembly. Its function is as follows. Structural component of the virion that interacts with glycoprotein N. Acts as a class II fusion protein that is activated upon acidification and subsequent repositioning of the glycoprotein N. The glycoprotein protrusions are arranged on an icosahedral lattice, with T=12 triangulation. They are able to attach the virion to the host cell receptor CD209/DC-SIGN and to promote fusion of membranes with the late endosome after endocytosis of the virion. Plays a role in the inhibition of virus-induced apoptosis. Plays a role for virus dissemination in vertebrates. In terms of biological role, plays a role for virus dissemination in mosquitoes. May act as a structural virion protein in insects. This is Envelopment polyprotein (GP) from Rift valley fever virus (strain ZH-548 M12) (RVFV).